The following is an 89-amino-acid chain: Small ribosomal subunit protein uS15 (89 aa).

Basic and acidic residues predominate over residues 1–21 (MSITAERKAEVIKDNARDKGD). The segment at 1–26 (MSITAERKAEVIKDNARDKGDTGSPE) is disordered.

The protein belongs to the universal ribosomal protein uS15 family. As to quaternary structure, part of the 30S ribosomal subunit. Forms a bridge to the 50S subunit in the 70S ribosome, contacting the 23S rRNA.

Functionally, one of the primary rRNA binding proteins, it binds directly to 16S rRNA where it helps nucleate assembly of the platform of the 30S subunit by binding and bridging several RNA helices of the 16S rRNA. In terms of biological role, forms an intersubunit bridge (bridge B4) with the 23S rRNA of the 50S subunit in the ribosome. In Sphingopyxis alaskensis (strain DSM 13593 / LMG 18877 / RB2256) (Sphingomonas alaskensis), this protein is Small ribosomal subunit protein uS15.